Consider the following 1293-residue polypeptide: DNA-directed RNA polymerase subunit beta' (1293 aa).

Zn(2+)-binding residues include cysteine 60, cysteine 62, cysteine 75, and cysteine 78. Mg(2+) contacts are provided by aspartate 535, aspartate 537, and aspartate 539. Residues cysteine 873, cysteine 950, cysteine 957, and cysteine 960 each coordinate Zn(2+).

It belongs to the RNA polymerase beta' chain family. The RNAP catalytic core consists of 2 alpha, 1 beta, 1 beta' and 1 omega subunit. When a sigma factor is associated with the core the holoenzyme is formed, which can initiate transcription. Mg(2+) is required as a cofactor. The cofactor is Zn(2+).

The catalysed reaction is RNA(n) + a ribonucleoside 5'-triphosphate = RNA(n+1) + diphosphate. Functionally, DNA-dependent RNA polymerase catalyzes the transcription of DNA into RNA using the four ribonucleoside triphosphates as substrates. The sequence is that of DNA-directed RNA polymerase subunit beta' from Cutibacterium acnes (strain DSM 16379 / KPA171202) (Propionibacterium acnes).